A 219-amino-acid chain; its full sequence is MCAAEARPARVAMLGGTFDPVHMGHLRSAVELREALELDRVHMVPARVPPHRATPGVSAERRAALLALGIGDTPGLAVDDREIARDGPSYSADTLASLREELGPQARLVMALGHDAYLNLAEWHEPQRLFDLAHIVVIDRPDHDRPLAPALQELVAGREVSDVETLMQAPAGSLLALRLPTRMAISATSIRERLRRGDSIRYLVPEAVERDLLARGLYA.

This sequence belongs to the NadD family.

It catalyses the reaction nicotinate beta-D-ribonucleotide + ATP + H(+) = deamido-NAD(+) + diphosphate. It participates in cofactor biosynthesis; NAD(+) biosynthesis; deamido-NAD(+) from nicotinate D-ribonucleotide: step 1/1. Functionally, catalyzes the reversible adenylation of nicotinate mononucleotide (NaMN) to nicotinic acid adenine dinucleotide (NaAD). This is Probable nicotinate-nucleotide adenylyltransferase from Chromohalobacter salexigens (strain ATCC BAA-138 / DSM 3043 / CIP 106854 / NCIMB 13768 / 1H11).